The chain runs to 229 residues: Aspartate-rich protein 1 (229 aa).

The segment at 84–106 (SEEDNDDAKILPSPVQGSSEDNL) is disordered.

The chain is Aspartate-rich protein 1 (DRICH1) from Homo sapiens (Human).